The sequence spans 295 residues: MFKKYIFILILFIASIARAEIIEVDSLNKIKQDFKENYNKNYVPQDLLVVTVLDEFLFKSLVPIVTQLDKDIYLTTLTPLLRNINKNSKTIYIKQLILTNDSYKKELQESDFPNFVNEISNSKIPIIAVNDGFTGNFNNIPKFEIWFADYLKKNFDIDFSNSFPNNNYIIFNNLDSFANTYPVFYKGILTSNNISEAEMMLNFLIQMNFIPKCFIMISSSIELLSSMELQLSSYSSNILFIGYHYNNKNTPKNKDVAYYTKLINDLISQINKLKRNNPPLKNNNAKGKNPYDTNK.

The signal sequence occupies residues 1 to 19 (MFKKYIFILILFIASIARA). The interval 275–295 (RNNPPLKNNNAKGKNPYDTNK) is disordered. The segment covering 276-295 (NNPPLKNNNAKGKNPYDTNK) has biased composition (low complexity).

This is an uncharacterized protein from Rickettsia conorii (strain ATCC VR-613 / Malish 7).